An 857-amino-acid polypeptide reads, in one-letter code: Envelope glycoprotein gp160 (857 aa).

Residues 1 to 26 form the signal peptide; it reads MAHTSNHLFILLLLISVYGFLGHKKN. Topologically, residues 27–682 are extracellular; the sequence is YVTVFYGIPA…FTSWMAYIRL (656 aa). Asn39 carries N-linked (GlcNAc...) asparagine; by host glycosylation. A disulfide bridge links Cys46 with Cys59. Residues Asn72, Asn81, Asn116, Asn121, Asn142, Asn150, Asn167, Asn193, Asn205, Asn237, Asn240, Asn271, Asn277, Asn288, Asn299, Asn309, Asn364, Asn397, Asn407, Asn447, Asn464, and Asn469 are each glycosylated (N-linked (GlcNAc...) asparagine; by host). Cystine bridges form between Cys103–Cys213, Cys110–Cys204, Cys115–Cys164, Cys226–Cys256, and Cys236–Cys248. Positions 115 to 163 are V1; that stretch reads CNNTGTNTTTKPITTPITTTKPSENLLNDTSPCIKNDTCPGIGLENTVD. The interval 164-204 is V2; that stretch reads CYFNMTGLRRDEKKQYKDTWYEKDLECNGNSTSTICYMRTC. The tract at residues 304-336 is V3; the sequence is CRRPGNKTVIPITIMSGLNFHSQPLNTRPRQAW. A disulfide bond links Cys304 and Cys337. 2 disulfides stabilise this stretch: Cys389-Cys446 and Cys396-Cys419. Residues 396–419 form a V4 region; the sequence is CNMTWFLNWVENRTGTTQKNYVTC. Residues 464–472 form a V5 region; sequence NDTKTNITM. Positions 515-535 are fusion peptide; the sequence is GVMVLGFLGLLAMAGSAMGAT. The interval 578–594 is immunosuppression; the sequence is LQTRVTAIEKYLKDQAL. 3 N-linked (GlcNAc...) asparagine; by host glycosylation sites follow: Asn614, Asn623, and Asn639. Residues 627–648 are a coiled coil; sequence QQWEKRVNFLDANITALLEEAQ. The segment at 660-681 is MPER; binding to GalCer; the sequence is KLNSWDVFGNWFDFTSWMAYIR. A helical transmembrane segment spans residues 683-703; it reads GLYVVAGLIVLRIVIYIMQML. The Cytoplasmic portion of the chain corresponds to 704–857; the sequence is ARLRKGYRPV…IRQGLELALL (154 aa). The YXXV motif; contains endocytosis signal motif lies at 710-713; that stretch reads YRPV. Cys776 carries S-palmitoyl cysteine; by host lipidation. Residues 856–857 carry the Di-leucine internalization motif motif; sequence LL.

As to quaternary structure, the mature envelope protein (Env) consists of a homotrimer of non-covalently associated gp120-gp41 heterodimers. The resulting complex protrudes from the virus surface as a spike. There seems to be as few as 10 spikes on the average virion. Interacts with human CD4, CCR5 and CXCR4, to form a P4HB/PDI-CD4-CXCR4-gp120 complex. Gp120 also interacts with the C-type lectins CD209/DC-SIGN and CLEC4M/DC-SIGNR (collectively referred to as DC-SIGN(R)). Gp120 and gp41 interact with GalCer. The mature envelope protein (Env) consists of a homotrimer of non-covalently associated gp120-gp41 heterodimers. The resulting complex protrudes from the virus surface as a spike. There seems to be as few as 10 spikes on the average virion. In terms of processing, specific enzymatic cleavages in vivo yield mature proteins. Envelope glycoproteins are synthesized as an inactive precursor that is heavily N-glycosylated and processed likely by host cell furin in the Golgi to yield the mature SU and TM proteins. The cleavage site between SU and TM requires the minimal sequence [KR]-X-[KR]-R. Post-translationally, palmitoylation of the transmembrane protein and of Env polyprotein (prior to its proteolytic cleavage) is essential for their association with host cell membrane lipid rafts. Palmitoylation is therefore required for envelope trafficking to classical lipid rafts, but not for viral replication.

The protein resides in the virion membrane. It is found in the host cell membrane. Its subcellular location is the host endosome membrane. Its function is as follows. The surface protein gp120 (SU) attaches the virus to the host lymphoid cell by binding to the primary receptor CD4. This interaction induces a structural rearrangement creating a high affinity binding site for a chemokine coreceptor like CXCR4 and/or CCR5. This peculiar 2 stage receptor-interaction strategy allows gp120 to maintain the highly conserved coreceptor-binding site in a cryptic conformation, protected from neutralizing antibodies. Since CD4 also displays a binding site for the disulfide-isomerase P4HB/PDI, a P4HB/PDI-CD4-CXCR4-gp120 complex may form. In that complex, P4HB/PDI could reach and reduce gp120 disulfide bonds, causing major conformational changes in gp120. TXN, another PDI family member could also be involved in disulfide rearrangements in Env during fusion. These changes are transmitted to the transmembrane protein gp41 and are thought to activate its fusogenic potential by unmasking its fusion peptide. The surface protein gp120 is a ligand for CD209/DC-SIGN and CLEC4M/DC-SIGNR, which are respectively found on dendritic cells (DCs), and on endothelial cells of liver sinusoids and lymph node sinuses. These interactions allow capture of viral particles at mucosal surfaces by these cells and subsequent transmission to permissive cells. DCs are professional antigen presenting cells, critical for host immunity by inducing specific immune responses against a broad variety of pathogens. They act as sentinels in various tissues where they take up antigen, process it, and present it to T-cells following migration to lymphoid organs. HIV subverts the migration properties of dendritic cells to gain access to CD4+ T-cells in lymph nodes. Virus transmission to permissive T-cells occurs either in trans (without DCs infection, through viral capture and transmission), or in cis (following DCs productive infection, through the usual CD4-gp120 interaction), thereby inducing a robust infection. In trans infection, bound virions remain infectious over days and it is proposed that they are not degraded, but protected in non-lysosomal acidic organelles within the DCs close to the cell membrane thus contributing to the viral infectious potential during DCs' migration from the periphery to the lymphoid tissues. On arrival at lymphoid tissues, intact virions recycle back to DCs' cell surface allowing virus transmission to CD4+ T-cells. Virion capture also seems to lead to MHC-II-restricted viral antigen presentation, and probably to the activation of HIV-specific CD4+ cells. Functionally, the transmembrane protein gp41 (TM) acts as a class I viral fusion protein. Under the current model, the protein has at least 3 conformational states: pre-fusion native state, pre-hairpin intermediate state, and post-fusion hairpin state. During fusion of viral and target intracellular membranes, the coiled coil regions (heptad repeats) assume a trimer-of-hairpins structure, positioning the fusion peptide in close proximity to the C-terminal region of the ectodomain. The formation of this structure appears to drive apposition and subsequent fusion of viral and target cell membranes. Complete fusion occurs in host cell endosomes and is dynamin-dependent, however some lipid transfer might occur at the plasma membrane. The virus undergoes clathrin-dependent internalization long before endosomal fusion, thus minimizing the surface exposure of conserved viral epitopes during fusion and reducing the efficacy of inhibitors targeting these epitopes. Membranes fusion leads to delivery of the nucleocapsid into the cytoplasm. In terms of biological role, the envelope glycoprotein gp160 precursor down-modulates cell surface CD4 antigen by interacting with it in the endoplasmic reticulum and blocking its transport to the cell surface. Its function is as follows. The gp120-gp41 heterodimer seems to contribute to T-cell depletion during HIV-1 infection. The envelope glycoproteins expressed on the surface of infected cells induce apoptosis through an interaction with uninfected cells expressing the receptor (CD4) and the coreceptors CXCR4 or CCR5. This type of bystander killing may be obtained by at least three distinct mechanisms. First, the interaction between the 2 cells can induce cellular fusion followed by nuclear fusion within the syncytium. Syncytia are condemned to die from apoptosis. Second, the 2 interacting cells may not fuse entirely and simply exchange plasma membrane lipids, after a sort of hemifusion process, followed by rapid death. Third, it is possible that virus-infected cells, on the point of undergoing apoptosis, fuse with CD4-expressing cells, in which case apoptosis is rapidly transmitted from one cell to the other and thus occurs in a sort of contagious fashion. The gp120-gp41 heterodimer allows rapid transcytosis of the virus through CD4 negative cells such as simple epithelial monolayers of the intestinal, rectal and endocervical epithelial barriers. Both gp120 and gp41 specifically recognize glycosphingolipids galactosyl-ceramide (GalCer) or 3' sulfo-galactosyl-ceramide (GalS) present in the lipid rafts structures of epithelial cells. Binding to these alternative receptors allows the rapid transcytosis of the virus through the epithelial cells. This transcytotic vesicle-mediated transport of virions from the apical side to the basolateral side of the epithelial cells does not involve infection of the cells themselves. In Homo sapiens (Human), this protein is Envelope glycoprotein gp160 (env).